The sequence spans 242 residues: Glutathione S-transferase 3 (242 aa).

The region spanning 1–79 is the GST N-terminal domain; the sequence is MIVLHHLKNS…HLVRKYGPSF (79 aa). The 150-residue stretch at 85–234 folds into the GST C-terminal domain; sequence DVAELEKYEL…ERYSHPPTPP (150 aa). Serine 228 carries the post-translational modification Phosphoserine. The residue at position 232 (threonine 232) is a Phosphothreonine.

This sequence belongs to the GST superfamily. As to quaternary structure, interacts with sad1.

The protein resides in the cytoplasm. It carries out the reaction RX + glutathione = an S-substituted glutathione + a halide anion + H(+). Its function is as follows. May have a role in the detoxification of various heavy metals. This Schizosaccharomyces pombe (strain 972 / ATCC 24843) (Fission yeast) protein is Glutathione S-transferase 3 (gst3).